The chain runs to 361 residues: Chorismate synthase (361 aa).

Arg-47 serves as a coordination point for NADP(+). Residues 124–126 (RAS), Gly-286, 301–305 (KPTAT), and Arg-327 contribute to the FMN site.

It belongs to the chorismate synthase family. In terms of assembly, homotetramer. The cofactor is FMNH2.

The catalysed reaction is 5-O-(1-carboxyvinyl)-3-phosphoshikimate = chorismate + phosphate. It functions in the pathway metabolic intermediate biosynthesis; chorismate biosynthesis; chorismate from D-erythrose 4-phosphate and phosphoenolpyruvate: step 7/7. Functionally, catalyzes the anti-1,4-elimination of the C-3 phosphate and the C-6 proR hydrogen from 5-enolpyruvylshikimate-3-phosphate (EPSP) to yield chorismate, which is the branch point compound that serves as the starting substrate for the three terminal pathways of aromatic amino acid biosynthesis. This reaction introduces a second double bond into the aromatic ring system. This chain is Chorismate synthase, found in Prochlorococcus marinus (strain NATL2A).